The sequence spans 131 residues: Meiotically up-regulated gene 115 protein (131 aa).

The protein localises to the mitochondrion. The protein resides in the nucleus. Its function is as follows. Has a role in meiosis. In Schizosaccharomyces pombe (strain 972 / ATCC 24843) (Fission yeast), this protein is Meiotically up-regulated gene 115 protein (mug115).